Here is a 380-residue protein sequence, read N- to C-terminus: Kappa-type opioid receptor (380 aa).

The Extracellular segment spans residues 1-57; sequence MESPIQIFRGDPGPTCSPSACLLPNSSSWFPNWAESDSNGSVGSEDQQLESAHISPA. N-linked (GlcNAc...) asparagine glycosylation is found at Asn25 and Asn39. Residues 58 to 85 form a helical membrane-spanning segment; sequence IPVIITAVYSVVFVVGLVGNSLVMFVII. The Cytoplasmic portion of the chain corresponds to 86 to 95; that stretch reads RYTKMKTATN. Residues 96 to 119 form a helical membrane-spanning segment; the sequence is IYIFNLALADALVTTTMPFQSAVY. Topologically, residues 120 to 132 are extracellular; that stretch reads LMNSWPFGDVLCK. An intrachain disulfide couples Cys131 to Cys210. A helical transmembrane segment spans residues 133-154; that stretch reads IVISIDYYNMFTSIFTLTMMSV. The Cytoplasmic portion of the chain corresponds to 155–173; sequence DRYIAVCHPVKALDFRTPL. A helical transmembrane segment spans residues 174–196; the sequence is KAKIINICIWLLASSVGISAIVL. Over 197 to 222 the chain is Extracellular; the sequence is GGTKVREDVDVIECSLQFPDDEYSWW. A helical transmembrane segment spans residues 223-247; that stretch reads DLFMKICVFVFAFVIPVLIIIVCYT. Topologically, residues 248–274 are cytoplasmic; that stretch reads LMILRLKSVRLLSGSREKDRNLRRITK. A helical membrane pass occupies residues 275-296; that stretch reads LVLVVVAVFIICWTPIHIFILV. The Extracellular portion of the chain corresponds to 297–311; sequence EALGSTSHSTAALSS. The helical transmembrane segment at 312 to 333 threads the bilayer; that stretch reads YYFCIALGYTNSSLNPVLYAFL. At 334–380 the chain is on the cytoplasmic side; it reads DENFKRCFRDFCFPIKMRMERQSTNRVRNTVQDPASMRDVGGMNKPV. Cys345 carries the S-palmitoyl cysteine lipid modification.

It belongs to the G-protein coupled receptor 1 family. Interacts with NHERF1. Interacts with GABARAPL1. In terms of tissue distribution, detected in brain (at protein level). Brain (neocortex, hippocampus, amygdala, medial habenula, hypothalamus, locus ceruleus, and parabrachial nucleus).

The protein localises to the cell membrane. G-protein coupled opioid receptor that functions as a receptor for endogenous alpha-neoendorphins and dynorphins, but has low affinity for beta-endorphins. Also functions as a receptor for various synthetic opioids and for the psychoactive diterpene salvinorin A. Ligand binding causes a conformation change that triggers signaling via guanine nucleotide-binding proteins (G proteins) and modulates the activity of down-stream effectors, such as adenylate cyclase. Signaling leads to the inhibition of adenylate cyclase activity. Inhibits neurotransmitter release by reducing calcium ion currents and increasing potassium ion conductance. Plays a role in the perception of pain. Plays a role in mediating reduced physical activity upon treatment with synthetic opioids. Plays a role in the regulation of salivation in response to synthetic opioids. May play a role in arousal and regulation of autonomic and neuroendocrine functions. The protein is Kappa-type opioid receptor (Oprk1) of Mus musculus (Mouse).